A 908-amino-acid chain; its full sequence is Glutamate receptor ionotropic, kainate 2 (908 aa).

The N-terminal stretch at 1–31 (MKIIFPILSNPVFRRTVKLLLCLLWIGYSQG) is a signal peptide. At 32-561 (TTHVLRFGGI…VFSFLNPLSP (530 aa)) the chain is on the extracellular side. 7 N-linked (GlcNAc...) asparagine glycosylation sites follow: N67, N73, N275, N378, N412, N423, and N430. An intrachain disulfide couples C96 to C347. P516, A518, and R523 together coordinate L-glutamate. The N-linked (GlcNAc...) asparagine glycan is linked to N546. A helical transmembrane segment spans residues 562-582 (DIWMYILLAYLGVSCVLFVIA). Residues 583-635 (RFSPYEWYNPHPCNPDSDVVENNFTLLNSFWFGVGALMQQGSELMPKALSTRI) lie on the Cytoplasmic side of the membrane. The chain crosses the membrane as a helical span at residues 636–656 (VGGIWWFFTLIIISSYTANLA). Residues 657-819 (AFLTVERMES…KEASALGVQN (163 aa)) are Extracellular-facing. L-glutamate is bound by residues A689, T690, and E738. C750 and C804 are disulfide-bonded. N751 carries N-linked (GlcNAc...) asparagine glycosylation. The helical transmembrane segment at 820-840 (IGGIFIVLAAGLVLSVFVAVG) threads the bilayer. Topologically, residues 841–908 (EFLYKSKKNA…RRLPGKETMA (68 aa)) are cytoplasmic. Phosphoserine; by PKC occurs at positions 846 and 868. A Glycyl lysine isopeptide (Lys-Gly) (interchain with G-Cter in SUMO1) cross-link involves residue K886.

It belongs to the glutamate-gated ion channel (TC 1.A.10.1) family. GRIK2 subfamily. As to quaternary structure, homotetramer and heterotetramer with GRIK5. Tetramers may be formed by the dimerization of dimers. Assembles into a kainate-gated homomeric channel that does not bind AMPA. Can form functional heteromeric receptors with GRIK5. Can form functional heteromeric receptors with GRIK3 and GRIK4. Interacts with DLG4. Interacts with NETO2. Interacts (via C-terminus) with KLHL17 (via kelch repeats); the interaction targets GRIK2 for degradation via ubiquitin-proteasome pathway. Sumoylation mediates kainate receptor-mediated endocytosis and regulates synaptic transmission. Sumoylation is enhanced by PIAS3 and desumoylated by SENP1. In terms of processing, ubiquitinated. Ubiquitination regulates the GRIK2 levels at the synapse by leading kainate receptor degradation through proteasome. Post-translationally, phosphorylated by PKC at Ser-868 upon agonist activation, this directly enhance sumoylation. Expression is higher in cerebellum than in cerebral cortex.

The protein localises to the cell membrane. It is found in the postsynaptic cell membrane. The enzyme catalyses Ca(2+)(in) = Ca(2+)(out). It catalyses the reaction Na(+)(in) = Na(+)(out). Cold receptor activity activated by temperatures between 10-19 degrees Celsius. Its function is as follows. Ionotropic glutamate receptor that functions as a cation permeable ligand-gated ion channel, gated by L-glutamate and the glutamatergic agonist kainic acid. L-glutamate acts as an excitatory neurotransmitter at many synapses in the central nervous system. Binding of the excitatory neurotransmitter L-glutamate induces a conformation change, leading to the opening of the cation channel, and thereby converts the chemical signal to an electrical impulse. The receptor then desensitizes rapidly and enters a transient inactive state, characterized by the presence of bound agonist. Modulates cell surface expression of NETO2. In association with GRIK3, involved in presynaptic facilitation of glutamate release at hippocampal mossy fiber synapses. Independent of its ionotropic glutamate receptor activity, acts as a thermoreceptor conferring sensitivity to cold temperatures. Functions in dorsal root ganglion neurons. This chain is Glutamate receptor ionotropic, kainate 2 (GRIK2), found in Homo sapiens (Human).